An 82-amino-acid chain; its full sequence is UPF0298 protein SPCG_0698 (82 aa).

It belongs to the UPF0298 family.

Its subcellular location is the cytoplasm. This Streptococcus pneumoniae (strain CGSP14) protein is UPF0298 protein SPCG_0698.